A 354-amino-acid polypeptide reads, in one-letter code: Rhodopsin (354 aa).

Over 1 to 36 (MNGTEGENFYVPMSNKTGVVRNPFEYPQYYLADHWM) the chain is Extracellular. N-linked (GlcNAc...) asparagine glycans are attached at residues N2 and N15. A helical transmembrane segment spans residues 37 to 61 (FAVLAAYMFFLIITGFPVNFLTLFV). Topologically, residues 62–73 (TIQNKKLRQPLN) are cytoplasmic. Residues 74–96 (YILLNLAVANLFMVFGGFTTTLI) traverse the membrane as a helical segment. The Extracellular segment spans residues 97 to 110 (TSMNGYFVFGSTGC). Residues C110 and C187 are joined by a disulfide bond. The chain crosses the membrane as a helical span at residues 111–133 (NLEGFFATLGGEISLWSLVVLAI). Residues 134–136 (ERY) carry the 'Ionic lock' involved in activated form stabilization motif. The Cytoplasmic segment spans residues 134-152 (ERYVVVCKPMSNFRFGSQH). A helical transmembrane segment spans residues 153 to 173 (AIAGVSLTWVMAMACAAPPLV). Residues 174–202 (GWSRYIPEGLQCSCGIDYYTPKPEINNVS) are Extracellular-facing. The N-linked (GlcNAc...) asparagine glycan is linked to N200. The chain crosses the membrane as a helical span at residues 203-224 (FVIYMFVVHFSIPLTIIFFCYG). The Cytoplasmic segment spans residues 225-252 (RLVCTVKAAAAQQQESETTQRAEREVTR). Residues 253 to 274 (MVVIMVIGFLICWLPYASVALY) form a helical membrane-spanning segment. Topologically, residues 275–286 (IFNNQGSEFGPV) are extracellular. A helical membrane pass occupies residues 287–308 (FMTIPSFFAKSSALYNPLIYIL). K296 is modified (N6-(retinylidene)lysine). The Cytoplasmic portion of the chain corresponds to 309 to 354 (MNKQFRNCMITTLCCGKNPFEEEESTSASASKTEASSVSSSQVSPA). S-palmitoyl cysteine attachment occurs at residues C322 and C323. Residues 333–354 (STSASASKTEASSVSSSQVSPA) are disordered. Low complexity predominate over residues 334–354 (TSASASKTEASSVSSSQVSPA).

The protein belongs to the G-protein coupled receptor 1 family. Opsin subfamily. Post-translationally, phosphorylated on some or all of the serine and threonine residues present in the C-terminal region. Contains one covalently linked retinal chromophore.

Its subcellular location is the membrane. It localises to the cell projection. The protein resides in the cilium. The protein localises to the photoreceptor outer segment. In terms of biological role, photoreceptor required for image-forming vision at low light intensity. While most salt water fish species use retinal as chromophore, most freshwater fish use 3-dehydroretinal, or a mixture of retinal and 3-dehydroretinal. Light-induced isomerization of 11-cis to all-trans retinal triggers a conformational change that activates signaling via G-proteins. Subsequent receptor phosphorylation mediates displacement of the bound G-protein alpha subunit by arrestin and terminates signaling. In Galeus melastomus (Blackmouth catshark), this protein is Rhodopsin (rho).